The primary structure comprises 78 residues: Large ribosomal subunit protein uL29 (78 aa).

It belongs to the universal ribosomal protein uL29 family.

This Crocosphaera subtropica (strain ATCC 51142 / BH68) (Cyanothece sp. (strain ATCC 51142)) protein is Large ribosomal subunit protein uL29.